The chain runs to 359 residues: Photosystem II protein D1 3 (359 aa).

The next 3 membrane-spanning stretches (helical) occupy residues 29-46, 118-133, and 142-156; these read YVGW…AATI, HFLI…EWEL, and WICV…AASA. H118 contributes to the chlorophyll a binding site. Y126 lines the pheophytin a pocket. [CaMn4O5] cluster-binding residues include D170 and E189. A helical transmembrane segment spans residues 197 to 218; that stretch reads FHMLGVAGVFGGSLFSAMHGSL. H198 provides a ligand contact to chlorophyll a. Residues H215 and 264–265 each bind a quinone; that span reads SF. Position 215 (H215) interacts with Fe cation. H272 provides a ligand contact to Fe cation. A helical membrane pass occupies residues 274 to 288; sequence FLAAWPVVGIWFTAL. [CaMn4O5] cluster is bound by residues H332, E333, D342, and A344. Residues 345-359 constitute a propeptide that is removed on maturation; sequence AAESTPVALQVPAIG.

This sequence belongs to the reaction center PufL/M/PsbA/D family. As to quaternary structure, PSII is composed of 1 copy each of membrane proteins PsbA, PsbB, PsbC, PsbD, PsbE, PsbF, PsbH, PsbI, PsbJ, PsbK, PsbL, PsbM, PsbT, PsbX, PsbY, PsbZ, Psb30/Ycf12, peripheral proteins PsbO, CyanoQ (PsbQ), PsbU, PsbV and a large number of cofactors. It forms dimeric complexes. The D1/D2 heterodimer binds P680, chlorophylls that are the primary electron donor of PSII, and subsequent electron acceptors. It shares a non-heme iron and each subunit binds pheophytin, quinone, additional chlorophylls, carotenoids and lipids. D1 provides most of the ligands for the Mn4-Ca-O5 cluster of the oxygen-evolving complex (OEC). There is also a Cl(-1) ion associated with D1 and D2, which is required for oxygen evolution. The PSII complex binds additional chlorophylls, carotenoids and specific lipids. is required as a cofactor. Post-translationally, tyr-161 forms a radical intermediate that is referred to as redox-active TyrZ, YZ or Y-Z. In terms of processing, C-terminally processed by CtpA; processing is essential to allow assembly of the oxygen-evolving complex and thus photosynthetic growth.

It is found in the cellular thylakoid membrane. It catalyses the reaction 2 a plastoquinone + 4 hnu + 2 H2O = 2 a plastoquinol + O2. In terms of biological role, photosystem II (PSII) is a light-driven water:plastoquinone oxidoreductase that uses light energy to abstract electrons from H(2)O, generating O(2) and a proton gradient subsequently used for ATP formation. It consists of a core antenna complex that captures photons, and an electron transfer chain that converts photonic excitation into a charge separation. The D1/D2 (PsbA/PsbD) reaction center heterodimer binds P680, the primary electron donor of PSII as well as several subsequent electron acceptors. The protein is Photosystem II protein D1 3 of Parasynechococcus marenigrum (strain WH8102).